A 526-amino-acid chain; its full sequence is MERKRFIDCDSTKILQELALNPLDLTAPGVLSAERIKKFSLLGGGFTFSFATERLDDAILAALISLAEERGLHESMLAMQQGQVVNYIEGFPSEMRPALHTATRAWVTDSSFTGEAEDIAVRSRVEAQRLKDFLTKVRSQFTTIVQIGIGGSELGPKALYRALRAYCPTDKHVHFISNIDPDNGAEVLDTIDCAKALVVVVSKSGTTIETAVNEAFFADYFAKKGLSFKDHFIAVTCEGSPMDDTGKYLEVFHLWESIGGRFSSTSMVGGVVLGFAYGFEVFLQLLQGASAMDQIALQPNARENLPMLSALISIWNRNFLGYPTEAVIPYSSGLEFFPAHLQQCCMESNGKSIVQDGRRVGFSTSPVIWGEPGTNGQHSFFQCLHQGTDIIPVEFIGFEKSQKGEDISFQGTTSSQKLFANMIAQAIALACGSENTNPNKNFDGNRPSSVLVSSQLNPYSLGELLSYYENKIVFQGFCWGINSFDQEGVSLGKALANRVLELLEGADASNFPEAASLLTLFNIKFR.

The active-site Proton donor is the glutamate 347. Active-site residues include histidine 378 and lysine 493.

It belongs to the GPI family.

The protein resides in the cytoplasm. It carries out the reaction alpha-D-glucose 6-phosphate = beta-D-fructose 6-phosphate. It participates in carbohydrate biosynthesis; gluconeogenesis. Its pathway is carbohydrate degradation; glycolysis; D-glyceraldehyde 3-phosphate and glycerone phosphate from D-glucose: step 2/4. Functionally, catalyzes the reversible isomerization of glucose-6-phosphate to fructose-6-phosphate. This Chlamydia pneumoniae (Chlamydophila pneumoniae) protein is Glucose-6-phosphate isomerase.